Consider the following 81-residue polypeptide: D-alanyl carrier protein (81 aa).

Positions M1–Q81 constitute a Carrier domain. An O-(pantetheine 4'-phosphoryl)serine modification is found at S39.

This sequence belongs to the DltC family. 4'-phosphopantetheine is transferred from CoA to a specific serine of apo-DCP.

It is found in the cytoplasm. Its pathway is cell wall biogenesis; lipoteichoic acid biosynthesis. Functionally, carrier protein involved in the D-alanylation of lipoteichoic acid (LTA). The loading of thioester-linked D-alanine onto DltC is catalyzed by D-alanine--D-alanyl carrier protein ligase DltA. The DltC-carried D-alanyl group is further transferred to cell membrane phosphatidylglycerol (PG) by forming an ester bond, probably catalyzed by DltD. D-alanylation of LTA plays an important role in modulating the properties of the cell wall in Gram-positive bacteria, influencing the net charge of the cell wall. This chain is D-alanyl carrier protein, found in Lacticaseibacillus casei (strain BL23) (Lactobacillus casei).